Here is a 792-residue protein sequence, read N- to C-terminus: Kinesin-like protein KIFC2 (792 aa).

2 disordered regions span residues 22-45 (AAAV…RRRP) and 142-184 (QGTQ…QEHQ). Residues 142 to 169 (QGTQPTCPVQPSTLDGSLSQEESSSQPT) are compositionally biased toward polar residues. Residues 186–347 (LQLEEEQRVW…ARMASLRQGC (162 aa)) are a coiled coil. The region spanning 409–732 (NIRVLCRLRP…LKFAERVGQV (324 aa)) is the Kinesin motor domain. 486–493 (GQTGTGKT) contributes to the ATP binding site. The disordered stretch occupies residues 734–792 (LGPARRRRAPRSGTPSSLSTDTPLTGTSCTPTPSPGSPPSTSPNSCSGLTLEPPGDPPP). Positions 744 to 764 (RSGTPSSLSTDTPLTGTSCTP) are enriched in low complexity. Residues 765-774 (TPSPGSPPST) show a composition bias toward pro residues.

It belongs to the TRAFAC class myosin-kinesin ATPase superfamily. Kinesin family. Present in axons and dendrites of neurons in the central and peripheral nervous systems.

It localises to the cytoplasm. Its subcellular location is the cytoskeleton. Its function is as follows. May play a role in microtubule-dependent retrograde axonal transport. May function as the motor for the transport of multivesicular body (MVB)-like organelles in dendrites. This is Kinesin-like protein KIFC2 (Kifc2) from Mus musculus (Mouse).